The chain runs to 144 residues: Probable nucleoside diphosphate kinase 5 (144 aa).

The ATP site is built by lysine 3, phenylalanine 51, arginine 79, threonine 85, arginine 99, and asparagine 109. Histidine 112 serves as the catalytic Pros-phosphohistidine intermediate.

This sequence belongs to the NDK family.

The enzyme catalyses a 2'-deoxyribonucleoside 5'-diphosphate + ATP = a 2'-deoxyribonucleoside 5'-triphosphate + ADP. It catalyses the reaction a ribonucleoside 5'-diphosphate + ATP = a ribonucleoside 5'-triphosphate + ADP. Involved in the synthesis of nucleoside triphosphates other than ATP. The ATP gamma phosphate is transferred to the NDP beta phosphate via a ping-pong mechanism, using a phosphorylated active-site intermediate. This is Probable nucleoside diphosphate kinase 5 from Arabidopsis thaliana (Mouse-ear cress).